We begin with the raw amino-acid sequence, 431 residues long: Magnetosome protein MamH (431 aa).

Helical transmembrane passes span 21–41 (LLSA…PLFL), 57–77 (ANVQ…LGYL), 86–106 (IIVA…LSPW), 107–127 (IGGA…IMSA), 156–176 (TAFM…QIPA), 178–198 (AGIA…AWLA), 243–263 (MVFV…LIKV), 274–294 (ILIG…RSFI), 302–321 (AVLL…GFII), 358–378 (LLGS…IFFV), and 380–400 (VGGF…TGVG).

Belongs to the major facilitator superfamily.

The protein localises to the magnetosome membrane. In terms of biological role, required for correct biomineralization of the magnetosome; probably transports some form of iron. Partially functionally redundant with MamZ. This is Magnetosome protein MamH (mamH) from Paramagnetospirillum magneticum (strain ATCC 700264 / AMB-1) (Magnetospirillum magneticum).